The primary structure comprises 71 residues: MSSCGCGSGCSCGSGCNCKNPVLGLSEKTTSKTIVADVAPVKSHPEGSEMSVEGGHGCKCGSSCNCDPCNC.

Belongs to the metallothionein superfamily. Type 15 family.

In terms of biological role, metallothioneins have a high content of cysteine residues that bind various heavy metals. This Casuarina glauca (Swamp oak) protein is Metallothionein-like protein 1 (MT1).